A 540-amino-acid chain; its full sequence is Glucose-6-phosphate isomerase (540 aa).

Glu350 (proton donor) is an active-site residue. Residues His381 and Lys503 contribute to the active site.

This sequence belongs to the GPI family.

It is found in the cytoplasm. It catalyses the reaction alpha-D-glucose 6-phosphate = beta-D-fructose 6-phosphate. The protein operates within carbohydrate biosynthesis; gluconeogenesis. It participates in carbohydrate degradation; glycolysis; D-glyceraldehyde 3-phosphate and glycerone phosphate from D-glucose: step 2/4. Its function is as follows. Catalyzes the reversible isomerization of glucose-6-phosphate to fructose-6-phosphate. The sequence is that of Glucose-6-phosphate isomerase from Burkholderia orbicola (strain MC0-3).